We begin with the raw amino-acid sequence, 155 residues long: 6,7-dimethyl-8-ribityllumazine synthase (155 aa).

5-amino-6-(D-ribitylamino)uracil contacts are provided by residues Trp23, 57 to 59 (AWE), and 81 to 83 (CVI). 86 to 87 (DT) contributes to the (2S)-2-hydroxy-3-oxobutyl phosphate binding site. The Proton donor role is filled by His89. Asn114 is a binding site for 5-amino-6-(D-ribitylamino)uracil. Arg128 contributes to the (2S)-2-hydroxy-3-oxobutyl phosphate binding site.

It belongs to the DMRL synthase family. In terms of assembly, forms an icosahedral capsid composed of 60 subunits, arranged as a dodecamer of pentamers.

It carries out the reaction (2S)-2-hydroxy-3-oxobutyl phosphate + 5-amino-6-(D-ribitylamino)uracil = 6,7-dimethyl-8-(1-D-ribityl)lumazine + phosphate + 2 H2O + H(+). It functions in the pathway cofactor biosynthesis; riboflavin biosynthesis; riboflavin from 2-hydroxy-3-oxobutyl phosphate and 5-amino-6-(D-ribitylamino)uracil: step 1/2. Functionally, catalyzes the formation of 6,7-dimethyl-8-ribityllumazine by condensation of 5-amino-6-(D-ribitylamino)uracil with 3,4-dihydroxy-2-butanone 4-phosphate. This is the penultimate step in the biosynthesis of riboflavin. The protein is 6,7-dimethyl-8-ribityllumazine synthase of Stenotrophomonas maltophilia (strain K279a).